We begin with the raw amino-acid sequence, 352 residues long: uncharacterized protein (352 aa).

An N-terminal signal peptide occupies residues 1–22 (MIFKKTILIFIISFFFISISFA). Low complexity predominate over residues 25–47 (SSSSSSSSSSSSSSWSSSESSSS). The tract at residues 25–49 (SSSSSSSSSSSSSSWSSSESSSSPA) is disordered. N76, N110, N182, N212, and N223 each carry an N-linked (GlcNAc...) asparagine glycan.

It localises to the secreted. This is an uncharacterized protein from Dictyostelium discoideum (Social amoeba).